Consider the following 473-residue polypeptide: Sucrose-6-phosphate hydrolase (473 aa).

Residues 44-47, Q63, 106-107, 167-168, and E224 each bind substrate; these read LLND, YS, and RD. D47 is an active-site residue.

Belongs to the glycosyl hydrolase 32 family.

Its subcellular location is the cytoplasm. The catalysed reaction is Hydrolysis of terminal non-reducing beta-D-fructofuranoside residues in beta-D-fructofuranosides.. Its pathway is glycan biosynthesis; sucrose metabolism. This is Sucrose-6-phosphate hydrolase (scrB) from Lactococcus lactis subsp. lactis (Streptococcus lactis).